Consider the following 91-residue polypeptide: DNA/RNA-binding protein Alba (91 aa).

It belongs to the histone-like Alba family.

It localises to the cytoplasm. The protein resides in the chromosome. Binds double-stranded DNA tightly but without sequence specificity. Involved in DNA compaction. The chain is DNA/RNA-binding protein Alba from Methanoculleus marisnigri (strain ATCC 35101 / DSM 1498 / JR1).